The chain runs to 324 residues: Ribose-phosphate pyrophosphokinase (324 aa).

Residues Asn45–Glu47 and Arg104–Gln105 each bind ATP. 2 residues coordinate Mg(2+): His138 and Asp178. The active site involves Lys201. D-ribose 5-phosphate is bound by residues Arg203, Asp229, and Asp233 to Thr237.

The protein belongs to the ribose-phosphate pyrophosphokinase family. Class I subfamily. Homohexamer. Mg(2+) serves as cofactor.

The protein resides in the cytoplasm. It catalyses the reaction D-ribose 5-phosphate + ATP = 5-phospho-alpha-D-ribose 1-diphosphate + AMP + H(+). It functions in the pathway metabolic intermediate biosynthesis; 5-phospho-alpha-D-ribose 1-diphosphate biosynthesis; 5-phospho-alpha-D-ribose 1-diphosphate from D-ribose 5-phosphate (route I): step 1/1. Involved in the biosynthesis of the central metabolite phospho-alpha-D-ribosyl-1-pyrophosphate (PRPP) via the transfer of pyrophosphoryl group from ATP to 1-hydroxyl of ribose-5-phosphate (Rib-5-P). This chain is Ribose-phosphate pyrophosphokinase, found in Streptomyces coelicolor (strain ATCC BAA-471 / A3(2) / M145).